A 204-amino-acid polypeptide reads, in one-letter code: Peptidyl-tRNA hydrolase (204 aa).

Tyr14 contributes to the tRNA binding site. His19 (proton acceptor) is an active-site residue. 3 residues coordinate tRNA: Phe64, Asn66, and Asn112.

Belongs to the PTH family. As to quaternary structure, monomer.

The protein resides in the cytoplasm. It carries out the reaction an N-acyl-L-alpha-aminoacyl-tRNA + H2O = an N-acyl-L-amino acid + a tRNA + H(+). In terms of biological role, hydrolyzes ribosome-free peptidyl-tRNAs (with 1 or more amino acids incorporated), which drop off the ribosome during protein synthesis, or as a result of ribosome stalling. Its function is as follows. Catalyzes the release of premature peptidyl moieties from peptidyl-tRNA molecules trapped in stalled 50S ribosomal subunits, and thus maintains levels of free tRNAs and 50S ribosomes. In Azorhizobium caulinodans (strain ATCC 43989 / DSM 5975 / JCM 20966 / LMG 6465 / NBRC 14845 / NCIMB 13405 / ORS 571), this protein is Peptidyl-tRNA hydrolase.